Here is a 452-residue protein sequence, read N- to C-terminus: MGDSGDAQKMQRLLEMLALNSGDMSKLTQQQRKAFEEYKFWKTQPVARFDEKVEEEGPINPPRRVEDVRDEPYPLLEEFEWRTMDITTGQDLEDVFVLLNENYIEDKDSTFRFNYTREFFNWALKPPGWRKEWHVGVRVRQSGRLVAFISAVPTTLEVRGREMKSVEINFLCIHKKLRSKRLAPILIKEITRRVNKCDIWHALYSAGIVLPSPISTCRYTHRPLNWSKLFDVGFTALPANATKTQMLAKYTLPKKPLVEGLRPMTDADVDGAFDLFNRYQKRFELIQTFDKSEFRHWFLGNEETPSVIYSYVVQNSEGKITDFVSFYSLPFTILKNPLHKELGIGYLFYYASDADFDYEDRYDPTATELLRKRLTQLINDVCILARDLKMDVFNALTSQDNALFLEDLKFGPGDGFLNFYLFNYRANPIRGGLTEDKKFDAKNRSNQGVVML.

Tetradecanoyl-CoA contacts are provided by residues 38–41 (YKFW), 171–173 (LCI), and 179–183 (SKRLA). The active-site Proton acceptor; via carboxylate is the leucine 452.

The protein belongs to the NMT family. As to quaternary structure, monomer.

The protein localises to the cytoplasm. The enzyme catalyses N-terminal glycyl-[protein] + tetradecanoyl-CoA = N-tetradecanoylglycyl-[protein] + CoA + H(+). Adds a myristoyl group to the N-terminal glycine residue of certain cellular proteins. This Eremothecium gossypii (strain ATCC 10895 / CBS 109.51 / FGSC 9923 / NRRL Y-1056) (Yeast) protein is Glycylpeptide N-tetradecanoyltransferase (NMT1).